Here is a 466-residue protein sequence, read N- to C-terminus: Glutamate--tRNA ligase (466 aa).

The 'HIGH' region signature appears at 10 to 20 (PSPTGYLHVGG). Zn(2+) is bound by residues Cys99, Cys101, Cys126, and His128. The short motif at 237–241 (RLSKR) is the 'KMSKS' region element. Residue Lys240 participates in ATP binding.

The protein belongs to the class-I aminoacyl-tRNA synthetase family. Glutamate--tRNA ligase type 1 subfamily. Monomer. It depends on Zn(2+) as a cofactor.

It localises to the cytoplasm. It catalyses the reaction tRNA(Glu) + L-glutamate + ATP = L-glutamyl-tRNA(Glu) + AMP + diphosphate. Catalyzes the attachment of glutamate to tRNA(Glu) in a two-step reaction: glutamate is first activated by ATP to form Glu-AMP and then transferred to the acceptor end of tRNA(Glu). This Trichlorobacter lovleyi (strain ATCC BAA-1151 / DSM 17278 / SZ) (Geobacter lovleyi) protein is Glutamate--tRNA ligase.